We begin with the raw amino-acid sequence, 119 residues long: Putative arsenical resistance operon repressor ArsR2 (119 aa).

Positions valine 24–glutamate 119 constitute an HTH arsR-type domain. The segment at residues valine 60–threonine 83 is a DNA-binding region (H-T-H motif).

Transcriptional repressor for the arsR2M operon. The chain is Putative arsenical resistance operon repressor ArsR2 (arsR2) from Halobacterium salinarum (strain ATCC 700922 / JCM 11081 / NRC-1) (Halobacterium halobium).